Reading from the N-terminus, the 724-residue chain is Hyaluronan mediated motility receptor (724 aa).

2 disordered regions span residues 1-22 (MSFPKAPLKRFNDPSGCAPSPG) and 40-81 (KSQR…QKND). Ser-20 is subject to Phosphoserine. Composition is skewed to basic and acidic residues over residues 46–60 (QQKESKQNLNVDKDT) and 70–81 (KSSESKESQKND). N-linked (GlcNAc...) asparagine glycans are attached at residues Asn-133, Asn-477, Asn-567, and Asn-588. The tract at residues 365-546 (EEMVKEKNLF…ITDLQNQLKQ (182 aa)) is required for interaction with FAM83D. Hyaluronic acid-binding stretches follow at residues 635–645 (KQKIKHVVKLK) and 657–666 (KLRCQLAKKK). Phosphothreonine is present on Thr-703.

As to quaternary structure, interacts with ANKRD26. Interacts with DYNLL1. Interacts with FAM83D/CHICA. In terms of tissue distribution, expressed in testis. Expressed in the breast.

Its subcellular location is the cell surface. The protein localises to the cytoplasm. It localises to the cytoskeleton. The protein resides in the spindle. Functionally, receptor for hyaluronic acid (HA). Involved in cell motility. When hyaluronan binds to HMMR, the phosphorylation of a number of proteins, including PTK2/FAK1 occurs. May also be involved in cellular transformation and metastasis formation, and in regulating extracellular-regulated kinase (ERK) activity. May act as a regulator of adipogenisis. In Homo sapiens (Human), this protein is Hyaluronan mediated motility receptor (HMMR).